The chain runs to 103 residues: A-type ATP synthase subunit F (103 aa).

The protein belongs to the V-ATPase F subunit family. In terms of assembly, has multiple subunits with at least A(3), B(3), C, D, E, F, H, I and proteolipid K(x).

It is found in the cell membrane. Functionally, component of the A-type ATP synthase that produces ATP from ADP in the presence of a proton gradient across the membrane. This Pyrococcus furiosus (strain ATCC 43587 / DSM 3638 / JCM 8422 / Vc1) protein is A-type ATP synthase subunit F.